Reading from the N-terminus, the 853-residue chain is Trimethylguanosine synthase (853 aa).

The interval Asn-54 to Asp-84 is disordered. Position 61 is a phosphothreonine (Thr-61). Over residues Ser-69–Glu-80 the composition is skewed to polar residues. Ser-81, Ser-85, Ser-92, and Ser-139 each carry phosphoserine. Position 144 is a phosphotyrosine (Tyr-144). Position 152 is a phosphoserine (Ser-152). 2 disordered regions span residues Val-328–Gly-437 and Glu-523–Ser-549. Residues Lys-365–Gln-383 are compositionally biased toward basic and acidic residues. A phosphoserine mark is found at Ser-405 and Ser-431. A compositionally biased stretch (acidic residues) spans Asp-424–Asp-435. Residues Gln-526 to Ser-541 are compositionally biased toward polar residues. Ser-572 is modified (phosphoserine). Positions Cys-594–Ile-623 are disordered. The segment covering Lys-612–Lys-621 has biased composition (basic residues). Residue Asp-711 participates in S-adenosyl-L-methionine binding.

Belongs to the methyltransferase superfamily. Trimethylguanosine synthase family. As to quaternary structure, may form homooligomers. Interacts with CREBBP/CBP, EED/WAIT1, EP300/P300, NCOA6/PRIP, PPARBP/PBP and SMN. Ubiquitously expressed.

It is found in the cytoplasm. It localises to the nucleus. The protein localises to the cajal body. Its subcellular location is the nucleolus. It catalyses the reaction a 5'-end (N(7)-methyl 5'-triphosphoguanosine)-ribonucleoside in snRNA + S-adenosyl-L-methionine = a 5'-end (N(2),N(7)-dimethyl 5'-triphosphoguanosine)-ribonucleoside in snRNA + S-adenosyl-L-homocysteine + H(+). The catalysed reaction is a 5'-end (N(7)-methyl 5'-triphosphoguanosine)-ribonucleoside in snoRNA + S-adenosyl-L-methionine = a 5'-end (N(2),N(7)-dimethyl 5'-triphosphoguanosine)-ribonucleoside in snoRNA + S-adenosyl-L-homocysteine + H(+). It carries out the reaction a 5'-end (N(2),N(7)-dimethyl 5'-triphosphoguanosine)-ribonucleoside in snRNA + S-adenosyl-L-methionine = a 5'-end (N(2),N(2),N(7)-trimethyl 5'-triphosphoguanosine)-ribonucleoside in snRNA + S-adenosyl-L-homocysteine + H(+). The enzyme catalyses a 5'-end (N(2),N(7)-dimethyl 5'-triphosphoguanosine)-ribonucleoside in snoRNA + S-adenosyl-L-methionine = a 5'-end (N(2),N(2),N(7)-trimethyl 5'-triphosphoguanosine)-ribonucleoside in snoRNA + S-adenosyl-L-homocysteine + H(+). Catalyzes the 2 serial methylation steps for the conversion of the 7-monomethylguanosine (m(7)G) caps of snRNAs and snoRNAs to a 2,2,7-trimethylguanosine (m(2,2,7)G) cap structure. The enzyme is specific for guanine, and N7 methylation must precede N2 methylation. Hypermethylation of the m7G cap of U snRNAs leads to their concentration in nuclear foci, their colocalization with coilin and the formation of canonical Cajal bodies (CBs). Plays a role in transcriptional regulation. This chain is Trimethylguanosine synthase (Tgs1), found in Mus musculus (Mouse).